The sequence spans 198 residues: Large ribosomal subunit protein bL25 (198 aa).

Belongs to the bacterial ribosomal protein bL25 family. CTC subfamily. In terms of assembly, part of the 50S ribosomal subunit; part of the 5S rRNA/L5/L18/L25 subcomplex. Contacts the 5S rRNA. Binds to the 5S rRNA independently of L5 and L18.

Functionally, this is one of the proteins that binds to the 5S RNA in the ribosome where it forms part of the central protuberance. The polypeptide is Large ribosomal subunit protein bL25 (Bordetella avium (strain 197N)).